A 330-amino-acid polypeptide reads, in one-letter code: Aspartate--ammonia ligase (330 aa).

It belongs to the class-II aminoacyl-tRNA synthetase family. AsnA subfamily.

It is found in the cytoplasm. The catalysed reaction is L-aspartate + NH4(+) + ATP = L-asparagine + AMP + diphosphate + H(+). It functions in the pathway amino-acid biosynthesis; L-asparagine biosynthesis; L-asparagine from L-aspartate (ammonia route): step 1/1. The chain is Aspartate--ammonia ligase from Escherichia coli O8 (strain IAI1).